The primary structure comprises 230 residues: Movement and silencing protein TGBp1 (230 aa).

The (+)RNA virus helicase ATP-binding domain maps to Met-1–Lys-114. The region spanning Ser-115 to His-230 is the (+)RNA virus helicase C-terminal domain.

Belongs to the Tymovirales TGBp1 protein family. Homodimer and homooligomer. Interacts with capsid protein. Interacts with host AGO1; this interaction targets the host protein for degradation, thereby suppressing the antiviral RNA silencing.

The protein localises to the host cytoplasm. In terms of biological role, transports viral genome to neighboring plant cells directly through plasmosdesmata, without any budding. The movement protein allows efficient cell to cell propagation, by bypassing the host cell wall barrier. Increases plasmodesma size exclusion limit. Acts as a suppressor of RNA-mediated gene silencing, also known as post-transcriptional gene silencing (PTGS), a mechanism of plant viral defense that limits the accumulation of viral RNAs. The protein is Movement and silencing protein TGBp1 of Plantago asiatica (P1AMV).